The primary structure comprises 29 residues: Bacteriocin (29 aa).

It is found in the secreted. In terms of biological role, has antibacterial activity against strains of L.monocytogenes, L.lactis, B.subtilis, S.typhi, S.aureus, C.perfringens, E.aerogenes and M.luteus but not against E.coli, S.sonnei, S.pneumoniae, S.faecalis, P.aeruginosa, K.pneumoniae or P.vulgaris. The protein is Bacteriocin of Lactococcus lactis subsp. lactis (Streptococcus lactis).